Here is a 308-residue protein sequence, read N- to C-terminus: Low density lipoprotein receptor adapter protein 1 (308 aa).

M1 is subject to N-acetylmethionine. S14, S186, and S202 each carry phosphoserine. The region spanning 42 to 196 (LLEGMLFSLK…QEGGDVLGAR (155 aa)) is the PID domain. Residues 212–216 (LLDLE) carry the Clathrin box motif. An AP-2 complex binding region spans residues 249–276 (WELDDGLDEAFSRLAQSRTNPQVLDTGL). Positions 257–266 (EAFSRLAQSR) match the [DE]-X(1,2)-F-X-X-[FL]-X-X-X-R motif motif.

Interacts (via PID domain) with LDLR (via NPXY motif). Binds to soluble clathrin trimers. Interacts with AP2B1; the interaction mediates the association with the AP-2 complex. Interacts with VLDLR. Interacts with LRP2. As to expression, expressed at high levels in the kidney, liver, and placenta, with lower levels detectable in brain, heart, muscle, colon, spleen, intestine, lung, and leukocytes.

It is found in the cytoplasm. Its function is as follows. Adapter protein (clathrin-associated sorting protein (CLASP)) required for efficient endocytosis of the LDL receptor (LDLR) in polarized cells such as hepatocytes and lymphocytes, but not in non-polarized cells (fibroblasts). May be required for LDL binding and internalization but not for receptor clustering in coated pits. May facilitate the endocytosis of LDLR and LDLR-LDL complexes from coated pits by stabilizing the interaction between the receptor and the structural components of the pits. May also be involved in the internalization of other LDLR family members. Binds to phosphoinositides, which regulate clathrin bud assembly at the cell surface. Required for trafficking of LRP2 to the endocytic recycling compartment which is necessary for LRP2 proteolysis, releasing a tail fragment which translocates to the nucleus and mediates transcriptional repression. This is Low density lipoprotein receptor adapter protein 1 from Homo sapiens (Human).